The sequence spans 298 residues: N-acetylmuramic acid 6-phosphate etherase (298 aa).

The SIS domain occupies 55–218; that stretch reads IHAQVSGGGR…STGLMIKSGK (164 aa). The active-site Proton donor is Glu-83. The active site involves Glu-114.

This sequence belongs to the GCKR-like family. MurNAc-6-P etherase subfamily. In terms of assembly, homodimer.

It carries out the reaction N-acetyl-D-muramate 6-phosphate + H2O = N-acetyl-D-glucosamine 6-phosphate + (R)-lactate. Its pathway is amino-sugar metabolism; 1,6-anhydro-N-acetylmuramate degradation. The protein operates within amino-sugar metabolism; N-acetylmuramate degradation. It functions in the pathway cell wall biogenesis; peptidoglycan recycling. Specifically catalyzes the cleavage of the D-lactyl ether substituent of MurNAc 6-phosphate, producing GlcNAc 6-phosphate and D-lactate. Together with AnmK, is also required for the utilization of anhydro-N-acetylmuramic acid (anhMurNAc) either imported from the medium or derived from its own cell wall murein, and thus plays a role in cell wall recycling. In Escherichia coli (strain SMS-3-5 / SECEC), this protein is N-acetylmuramic acid 6-phosphate etherase.